The primary structure comprises 269 residues: Hydroxyethylthiazole kinase (269 aa).

Met45 lines the substrate pocket. 2 residues coordinate ATP: Arg121 and Thr167. Position 194 (Gly194) interacts with substrate.

The protein belongs to the Thz kinase family. It depends on Mg(2+) as a cofactor.

It catalyses the reaction 5-(2-hydroxyethyl)-4-methylthiazole + ATP = 4-methyl-5-(2-phosphooxyethyl)-thiazole + ADP + H(+). It functions in the pathway cofactor biosynthesis; thiamine diphosphate biosynthesis; 4-methyl-5-(2-phosphoethyl)-thiazole from 5-(2-hydroxyethyl)-4-methylthiazole: step 1/1. In terms of biological role, catalyzes the phosphorylation of the hydroxyl group of 4-methyl-5-beta-hydroxyethylthiazole (THZ). The polypeptide is Hydroxyethylthiazole kinase (Bacillus licheniformis (strain ATCC 14580 / DSM 13 / JCM 2505 / CCUG 7422 / NBRC 12200 / NCIMB 9375 / NCTC 10341 / NRRL NRS-1264 / Gibson 46)).